The sequence spans 501 residues: Alveolysin (501 aa).

A signal peptide spans methionine 1–alanine 32. A run of 4 beta stranded transmembrane segments spans residues glutamine 191–valine 204, isoleucine 211–glutamate 220, serine 289–leucine 298, and glutamine 306–serine 318. The Conserved undecapeptide signature appears at glutamate 460 to arginine 470. Positions threonine 492–leucine 493 match the Cholesterol binding motif.

This sequence belongs to the cholesterol-dependent cytolysin family. As to quaternary structure, homooligomeric pore complex of 35 to 50 subunits; when inserted in the host membrane.

It is found in the secreted. It localises to the host cell membrane. Its activity is regulated as follows. Inhibited by cholesterol and thiol reagents. Functionally, a cholesterol-dependent toxin that causes cytolysis by forming pores in cholesterol containing host membranes. After binding to target membranes, the protein undergoes a major conformation change, leading to its insertion in the host membrane and formation of an oligomeric pore complex. Cholesterol is required for binding to host cell membranes, membrane insertion and pore formation; cholesterol binding is mediated by a Thr-Leu pair in the C-terminus. Can be reversibly inactivated by oxidation. The polypeptide is Alveolysin (alv) (Paenibacillus alvei (Bacillus alvei)).